A 247-amino-acid chain; its full sequence is Phosphate import ATP-binding protein PstB (247 aa).

The 241-residue stretch at 2–242 folds into the ABC transporter domain; the sequence is CRDVNVYYGE…PRHPLTEDYI (241 aa). 32–39 contacts ATP; it reads GPSGCGKS.

This sequence belongs to the ABC transporter superfamily. Phosphate importer (TC 3.A.1.7) family. As to quaternary structure, the complex is composed of two ATP-binding proteins (PstB), two transmembrane proteins (PstC and PstA) and a solute-binding protein (PstS).

The protein resides in the cell inner membrane. The enzyme catalyses phosphate(out) + ATP + H2O = ADP + 2 phosphate(in) + H(+). Part of the ABC transporter complex PstSACB involved in phosphate import. Responsible for energy coupling to the transport system. In Methylococcus capsulatus (strain ATCC 33009 / NCIMB 11132 / Bath), this protein is Phosphate import ATP-binding protein PstB.